The sequence spans 205 residues: Methylthioribulose-1-phosphate dehydratase (205 aa).

Residues His96 and His98 each contribute to the Zn(2+) site.

The protein belongs to the aldolase class II family. MtnB subfamily. Zn(2+) is required as a cofactor.

It catalyses the reaction 5-(methylsulfanyl)-D-ribulose 1-phosphate = 5-methylsulfanyl-2,3-dioxopentyl phosphate + H2O. The protein operates within amino-acid biosynthesis; L-methionine biosynthesis via salvage pathway; L-methionine from S-methyl-5-thio-alpha-D-ribose 1-phosphate: step 2/6. Catalyzes the dehydration of methylthioribulose-1-phosphate (MTRu-1-P) into 2,3-diketo-5-methylthiopentyl-1-phosphate (DK-MTP-1-P). In Pseudomonas paraeruginosa (strain DSM 24068 / PA7) (Pseudomonas aeruginosa (strain PA7)), this protein is Methylthioribulose-1-phosphate dehydratase.